The chain runs to 232 residues: Membrane steroid-binding protein 1 (232 aa).

A helical transmembrane segment spans residues Ala25–Phe45. 2 disordered regions span residues Pro48–Glu77 and Thr172–Ser232. Positions Leu71–Lys170 constitute a Cytochrome b5 heme-binding domain. The segment at Glu73 to Lys170 is steroid-binding. Residues Ala179 to Ala193 are compositionally biased toward low complexity. The span at Glu194 to Ala219 shows a compositional bias: basic and acidic residues.

The protein belongs to the cytochrome b5 family. MAPR subfamily. Interacts with SERL2. In terms of tissue distribution, expressed in leaf sheaths, leaf blades and panicles.

The protein resides in the cell membrane. In terms of biological role, binds multiple steroid compounds. May act as a coreceptor with SERL2 and enhance its endocytosis. In Oryza sativa subsp. japonica (Rice), this protein is Membrane steroid-binding protein 1.